Here is a 293-residue protein sequence, read N- to C-terminus: Probable porphobilinogen deaminase (293 aa).

Position 233 is an S-(dipyrrolylmethanemethyl)cysteine (Cys-233).

The protein belongs to the HMBS family. The cofactor is dipyrromethane.

The catalysed reaction is 4 porphobilinogen + H2O = hydroxymethylbilane + 4 NH4(+). The protein operates within porphyrin-containing compound metabolism; protoporphyrin-IX biosynthesis; coproporphyrinogen-III from 5-aminolevulinate: step 2/4. Functionally, tetrapolymerization of the monopyrrole PBG into the hydroxymethylbilane pre-uroporphyrinogen in several discrete steps. This is Probable porphobilinogen deaminase from Saccharolobus islandicus (strain Y.G.57.14 / Yellowstone #1) (Sulfolobus islandicus).